Here is a 641-residue protein sequence, read N- to C-terminus: Chaperone protein DnaK (641 aa).

Thr-200 is modified (phosphothreonine; by autocatalysis). A compositionally biased stretch (low complexity) spans 606 to 623 (AEQGGNADAASGNAQASK). A disordered region spans residues 606 to 627 (AEQGGNADAASGNAQASKAADD).

This sequence belongs to the heat shock protein 70 family.

In terms of biological role, acts as a chaperone. The protein is Chaperone protein DnaK of Xanthomonas euvesicatoria pv. vesicatoria (strain 85-10) (Xanthomonas campestris pv. vesicatoria).